A 411-amino-acid polypeptide reads, in one-letter code: Lissencephaly-1 homolog (411 aa).

Residues Gln-9–Thr-41 enclose the LisH domain. Residues Thr-56–Ala-83 adopt a coiled-coil conformation. WD repeat units lie at residues Gly-106–Lys-147, Gly-148–Lys-187, Gly-191–Thr-230, Gly-233–Glu-272, Asp-275–Thr-334, Gly-337–Thr-376, and Ala-379–Arg-411.

It belongs to the WD repeat LIS1/nudF family.

The protein localises to the cytoplasm. It localises to the cytoskeleton. Its subcellular location is the microtubule organizing center. It is found in the centrosome. Its function is as follows. Positively regulates the activity of the minus-end directed microtubule motor protein dynein. May enhance dynein-mediated microtubule sliding by targeting dynein to the microtubule plus end. Required for several dynein- and microtubule-dependent processes. The chain is Lissencephaly-1 homolog from Drosophila mojavensis (Fruit fly).